Consider the following 173-residue polypeptide: Large ribosomal subunit protein uL10 (173 aa).

The protein belongs to the universal ribosomal protein uL10 family. In terms of assembly, part of the ribosomal stalk of the 50S ribosomal subunit. The N-terminus interacts with L11 and the large rRNA to form the base of the stalk. The C-terminus forms an elongated spine to which L12 dimers bind in a sequential fashion forming a multimeric L10(L12)X complex.

Its function is as follows. Forms part of the ribosomal stalk, playing a central role in the interaction of the ribosome with GTP-bound translation factors. The polypeptide is Large ribosomal subunit protein uL10 (Chloroherpeton thalassium (strain ATCC 35110 / GB-78)).